The following is a 487-amino-acid chain: Cobyric acid synthase (487 aa).

A GATase cobBQ-type domain is found at 249–435 (GIDIAIVRLP…IHGIFDEGDF (187 aa)). C330 functions as the Nucleophile in the catalytic mechanism. Residue H427 is part of the active site.

It belongs to the CobB/CobQ family. CobQ subfamily.

It participates in cofactor biosynthesis; adenosylcobalamin biosynthesis. Catalyzes amidations at positions B, D, E, and G on adenosylcobyrinic A,C-diamide. NH(2) groups are provided by glutamine, and one molecule of ATP is hydrogenolyzed for each amidation. The sequence is that of Cobyric acid synthase from Clostridium perfringens (strain SM101 / Type A).